The sequence spans 162 residues: Large ribosomal subunit protein uL10 (162 aa).

This sequence belongs to the universal ribosomal protein uL10 family. Part of the ribosomal stalk of the 50S ribosomal subunit. The N-terminus interacts with L11 and the large rRNA to form the base of the stalk. The C-terminus forms an elongated spine to which L12 dimers bind in a sequential fashion forming a multimeric L10(L12)X complex.

Its function is as follows. Forms part of the ribosomal stalk, playing a central role in the interaction of the ribosome with GTP-bound translation factors. This chain is Large ribosomal subunit protein uL10, found in Vibrio parahaemolyticus serotype O3:K6 (strain RIMD 2210633).